Consider the following 403-residue polypeptide: Na(+)-translocating NADH-quinone reductase subunit B (403 aa).

The next 9 helical transmembrane spans lie at 56–76 (MMII…YNVG), 121–141 (AYFL…EVLF), 164–184 (LPPS…VVLG), 225–245 (GFAG…NILG), 260–280 (GSMG…LLLT), 287–307 (IVAG…AIGS), 312–332 (MFAM…GMIF), 348–368 (WLFG…NPAF), and 371–391 (GMML…HFVV). T230 carries the FMN phosphoryl threonine modification.

The protein belongs to the NqrB/RnfD family. In terms of assembly, composed of six subunits; NqrA, NqrB, NqrC, NqrD, NqrE and NqrF. FMN serves as cofactor.

The protein localises to the cell inner membrane. It carries out the reaction a ubiquinone + n Na(+)(in) + NADH + H(+) = a ubiquinol + n Na(+)(out) + NAD(+). Its function is as follows. NQR complex catalyzes the reduction of ubiquinone-1 to ubiquinol by two successive reactions, coupled with the transport of Na(+) ions from the cytoplasm to the periplasm. NqrA to NqrE are probably involved in the second step, the conversion of ubisemiquinone to ubiquinol. In Pseudomonas aeruginosa (strain LESB58), this protein is Na(+)-translocating NADH-quinone reductase subunit B.